Consider the following 97-residue polypeptide: RNA-binding protein Hfq (97 aa).

In terms of domain architecture, Sm spans 10-70 (DPFLNALRKE…ISTIVPARSV (61 aa)). The tract at residues 74-97 (HENRPQAAPTSTLVQVETVQQPAE) is disordered. The segment covering 81 to 97 (APTSTLVQVETVQQPAE) has biased composition (polar residues).

The protein belongs to the Hfq family. Homohexamer.

Its function is as follows. RNA chaperone that binds small regulatory RNA (sRNAs) and mRNAs to facilitate mRNA translational regulation in response to envelope stress, environmental stress and changes in metabolite concentrations. Also binds with high specificity to tRNAs. This is RNA-binding protein Hfq from Neisseria meningitidis serogroup A / serotype 4A (strain DSM 15465 / Z2491).